The primary structure comprises 147 residues: Thyrotropin subunit beta (147 aa).

The first 20 residues, 1–20 (MELSVAMYGLLCLLFSQAVP), serve as a signal peptide directing secretion. 6 disulfide bridges follow: Cys22–Cys72, Cys36–Cys87, Cys39–Cys127, Cys47–Cys103, Cys51–Cys105, and Cys108–Cys115. N-linked (GlcNAc...) asparagine glycosylation occurs at Asn43.

Belongs to the glycoprotein hormones subunit beta family. Heterodimer of a common alpha chain and a unique beta chain which confers biological specificity to thyrotropin, lutropin, follitropin and gonadotropin. Pituitary gland. Higher levels seen in immature fishes than the mature fishes.

It localises to the secreted. In terms of biological role, indispensable for the control of thyroid structure and metabolism. May play some role in the biological processes of the immature fishes. The sequence is that of Thyrotropin subunit beta (tshb) from Oncorhynchus mykiss (Rainbow trout).